A 68-amino-acid polypeptide reads, in one-letter code: Putative membrane protein insertion efficiency factor (68 aa).

Belongs to the UPF0161 family.

It localises to the cell inner membrane. Its function is as follows. Could be involved in insertion of integral membrane proteins into the membrane. This chain is Putative membrane protein insertion efficiency factor, found in Aquifex aeolicus (strain VF5).